A 1072-amino-acid polypeptide reads, in one-letter code: Zinc finger MIZ domain-containing protein 1 (1072 aa).

The tract at residues 1-120 (MNSMDRHIQQ…HQKSRQNDPP (120 aa)) is sufficient for transactivation activity; sufficient for interaction with NOTCH1. Lysine 91 is covalently cross-linked (Glycyl lysine isopeptide (Lys-Gly) (interchain with G-Cter in SUMO2)). Disordered regions lie at residues 112–141 (QKSRQNDPPGKLPMQPPLSSMSSMKPTLSH) and 362–538 (TPSG…PYLS). Over residues 128 to 141 (PLSSMSSMKPTLSH) the composition is skewed to low complexity. A compositionally biased stretch (polar residues) spans 419–436 (YGNQQYGPNSQFPTQPGQ). Residues 437–446 (YPTPNPPRPL) are compositionally biased toward pro residues. A compositionally biased stretch (low complexity) spans 489–501 (SSGSSYSSYSQGS). Residues 517-528 (SPVPGNPTPPMT) are compositionally biased toward pro residues. The SP-RING-type zinc finger occupies 734-815 (GEDGVEQTAI…MWGILNAIQH (82 aa)). Residues cysteine 765, histidine 767, cysteine 788, and cysteine 791 each coordinate Zn(2+). Residues lysine 841 and lysine 850 each participate in a glycyl lysine isopeptide (Lys-Gly) (interchain with G-Cter in SUMO2) cross-link. Residues 844 to 1072 (PDGIPSKRFK…DDLLSLFENN (229 aa)) form a transactivation domain region. The segment covering 875–886 (GPSPYPLPPPPG) has biased composition (pro residues). Residues 875 to 1072 (GPSPYPLPPP…DDLLSLFENN (198 aa)) form a disordered region. Composition is skewed to polar residues over residues 888 to 902 (TSSNDYSSQGNNYQG) and 958 to 968 (SSDQPHPSIQQ). Residues 988–1001 (APPPSQPPRQPPQA) show a composition bias toward pro residues. The segment covering 1045–1072 (PDELLSYLDPPDLPSNSNDDLLSLFENN) has biased composition (low complexity).

In terms of assembly, interacts with AR, but not with ESR1, NR3C1, PGR, THRB nor VDR. Interacts with NOTCH1 and RBPJ. Interacts with SMARCA4. Interacts (via SP-RING-type domain) with SMAD3 and SMAD4 (via MH2 domain). Expressed in brain.

It is found in the nucleus. The protein localises to the nucleoplasm. The protein resides in the cytoplasm. Functionally, acts as a transcriptional coactivator. Increases ligand-dependent transcriptional activity of AR and promotes AR sumoylation. The stimulation of AR activity is dependent upon sumoylation. Also functions as a transcriptional coactivator in the TGF-beta signaling pathway by increasing the activity of the SMAD3/SMAD4 transcriptional complex. Involved in transcriptional activation of a subset of NOTCH1 target genes including MYC. Involved in thymocyte and T cell development. Involved in the regulation of postmitotic positioning of pyramidal neurons in the developing cerebral cortex. This Mus musculus (Mouse) protein is Zinc finger MIZ domain-containing protein 1 (Zmiz1).